Reading from the N-terminus, the 38-residue chain is Cytochrome b6-f complex subunit 5 (38 aa).

The chain crosses the membrane as a helical span at residues L5 to A25.

This sequence belongs to the PetG family. As to quaternary structure, the 4 large subunits of the cytochrome b6-f complex are cytochrome b6, subunit IV (17 kDa polypeptide, PetD), cytochrome f and the Rieske protein, while the 4 small subunits are PetG, PetL, PetM and PetN. The complex functions as a dimer.

It localises to the cellular thylakoid membrane. In terms of biological role, component of the cytochrome b6-f complex, which mediates electron transfer between photosystem II (PSII) and photosystem I (PSI), cyclic electron flow around PSI, and state transitions. PetG is required for either the stability or assembly of the cytochrome b6-f complex. In Rippkaea orientalis (strain PCC 8801 / RF-1) (Cyanothece sp. (strain PCC 8801)), this protein is Cytochrome b6-f complex subunit 5.